Reading from the N-terminus, the 723-residue chain is Nucleolar protein 11 (723 aa).

Residue Lys-346 is modified to N6-methyllysine. Residues 549 to 572 form a disordered region; the sequence is FGPEDGNCSEDSQQLNDKPADTAH.

As to quaternary structure, interacts with UTP4. Interacts with FBL/fibrillarin in a transcription-dependent manner. May associate with the proposed t-UTP subcomplex of the SSU processome containing at least UTP4, WDR43, HEATR1, UTP15, WDR75.

The protein resides in the nucleus. The protein localises to the nucleolus. Functionally, ribosome biogenesis factor. May be required for both optimal rDNA transcription and small subunit (SSU) pre-rRNA processing at sites A', A0, 1 and 2b. The polypeptide is Nucleolar protein 11 (Nol11) (Mus musculus (Mouse)).